Consider the following 283-residue polypeptide: Pantothenate synthetase (283 aa).

Residue 26 to 33 coordinates ATP; it reads MGNLHEGH. Histidine 33 functions as the Proton donor in the catalytic mechanism. (R)-pantoate is bound at residue glutamine 57. Position 57 (glutamine 57) interacts with beta-alanine. 144–147 is an ATP binding site; sequence GKKD. Glutamine 150 contacts (R)-pantoate. Residues isoleucine 173 and 181–184 each bind ATP; that span reads LSSR.

Belongs to the pantothenate synthetase family. Homodimer.

It localises to the cytoplasm. It catalyses the reaction (R)-pantoate + beta-alanine + ATP = (R)-pantothenate + AMP + diphosphate + H(+). It functions in the pathway cofactor biosynthesis; (R)-pantothenate biosynthesis; (R)-pantothenate from (R)-pantoate and beta-alanine: step 1/1. Catalyzes the condensation of pantoate with beta-alanine in an ATP-dependent reaction via a pantoyl-adenylate intermediate. The sequence is that of Pantothenate synthetase from Polynucleobacter necessarius subsp. necessarius (strain STIR1).